Reading from the N-terminus, the 141-residue chain is Nucleoside diphosphate kinase (141 aa).

The ATP site is built by Lys-11, Phe-59, Arg-87, Thr-93, Arg-104, and Asn-114. The active-site Pros-phosphohistidine intermediate is His-117.

Belongs to the NDK family. Homotetramer. Mg(2+) serves as cofactor.

It is found in the cytoplasm. It carries out the reaction a 2'-deoxyribonucleoside 5'-diphosphate + ATP = a 2'-deoxyribonucleoside 5'-triphosphate + ADP. The catalysed reaction is a ribonucleoside 5'-diphosphate + ATP = a ribonucleoside 5'-triphosphate + ADP. Functionally, major role in the synthesis of nucleoside triphosphates other than ATP. The ATP gamma phosphate is transferred to the NDP beta phosphate via a ping-pong mechanism, using a phosphorylated active-site intermediate. This Albidiferax ferrireducens (strain ATCC BAA-621 / DSM 15236 / T118) (Rhodoferax ferrireducens) protein is Nucleoside diphosphate kinase.